Consider the following 1167-residue polypeptide: PH and Rap-GAP domain-containing protein DDB_G0271806 (1167 aa).

2 consecutive PH domains span residues 35 to 140 and 165 to 257; these read NCVK…SSSL and HVYL…SRIP. The segment at 95 to 160 is disordered; sequence GIDNNNCTNS…TNANTNNGLS (66 aa). The segment covering 98–155 has biased composition (low complexity); the sequence is NNNCTNSNSNNNNNNSDLIHLSAPSLSSSTSSTISPISSSSSLTTTTTTTTTTTNANT. Disordered regions lie at residues 335-361, 376-400, and 645-734; these read SGGG…GGSL, WRFS…STQV, and YSRS…LEPE. Residues 340–351 show a composition bias toward low complexity; the sequence is NNSSPSSLQSQQ. The segment covering 648–676 has biased composition (polar residues); that stretch reads SEPNLQSCLSSSPSTRETMVPSSPSSHQL. The span at 687–732 shows a compositional bias: low complexity; it reads EQQLSSSSSSSSQQLQLQLQQQEQEQLLQEQPEAEQSQPEPQPQLE. The 213-residue stretch at 950-1162 folds into the Rap-GAP domain; it reads LLSFEERQTT…RTRESLLNYY (213 aa).

The chain is PH and Rap-GAP domain-containing protein DDB_G0271806 from Dictyostelium discoideum (Social amoeba).